Consider the following 1162-residue polypeptide: Transcription termination factor 2 (1162 aa).

Residues cysteine 6, histidine 9, cysteine 32, and cysteine 37 each contribute to the Zn(2+) site. The GRF-type zinc finger occupies 6 to 46 (CPEHGTFCFLKTGVRDGPNKGKSFYVCRADTCSFVRATDIP). Disordered regions lie at residues 97–116 (PDSK…ETFH), 142–358 (IKGE…EEDD), 388–407 (DRSV…KVEP), and 459–503 (LSPE…TQPV). The segment covering 105–116 (SNKSQHASETFH) has biased composition (polar residues). A compositionally biased stretch (basic and acidic residues) spans 142 to 178 (IKGEGEEKKADKKQREKGDQLFDQKKEQKPEMMEKDL). A Glycyl lysine isopeptide (Lys-Gly) (interchain with G-Cter in SUMO2) cross-link involves residue lysine 143. The segment covering 219-232 (IKSQQCQGNELTRP) has biased composition (polar residues). Residues 233 to 245 (SASSQEKSSGKSQ) are compositionally biased toward low complexity. Residues 246–258 (DVQRESEPLREKV) are compositionally biased toward basic and acidic residues. Positions 261–274 (LLPQNVHSHNSISK) are enriched in polar residues. Residues 323 to 338 (PAPGGPAAQAAPAAPG) are compositionally biased toward low complexity. Positions 459-485 (LSPEQGTNEKSNSQVPQQSHFTKTTTG) are enriched in polar residues. Serine 460 is subject to Phosphoserine. The 204-residue stretch at 583-786 (WRESQKPQGG…YSLLKFLRCS (204 aa)) folds into the Helicase ATP-binding domain. 596 to 603 (DDMGLGKT) lines the ATP pocket. The DEAH box motif lies at 737 to 740 (DEAH). A disordered region spans residues 871-890 (KRHESRGNQSGRSPNNPFSR). Residues 877–888 (GNQSGRSPNNPF) show a composition bias toward polar residues. A phosphoserine mark is found at serine 883 and serine 908. Residues 995-1157 (SLLAELEAIQ…VTKLTLADLR (163 aa)) form the Helicase C-terminal domain.

This sequence belongs to the SNF2/RAD54 helicase family. In terms of assembly, interacts with CDC5L. Part of the spliceosome.

The protein localises to the cytoplasm. It localises to the nucleus. DsDNA-dependent ATPase which acts as a transcription termination factor by coupling ATP hydrolysis with removal of RNA polymerase II from the DNA template. May contribute to mitotic transcription repression. May also be involved in pre-mRNA splicing. The sequence is that of Transcription termination factor 2 (TTF2) from Homo sapiens (Human).